The sequence spans 330 residues: Beta-ketoacyl-[acyl-carrier-protein] synthase III (330 aa).

Residues cysteine 114 and histidine 257 contribute to the active site. Residues 258–262 form an ACP-binding region; that stretch reads QANLR. Asparagine 287 is a catalytic residue.

This sequence belongs to the thiolase-like superfamily. FabH family. As to quaternary structure, homodimer.

It localises to the cytoplasm. The enzyme catalyses malonyl-[ACP] + acetyl-CoA + H(+) = 3-oxobutanoyl-[ACP] + CO2 + CoA. The protein operates within lipid metabolism; fatty acid biosynthesis. Its function is as follows. Catalyzes the condensation reaction of fatty acid synthesis by the addition to an acyl acceptor of two carbons from malonyl-ACP. Catalyzes the first condensation reaction which initiates fatty acid synthesis and may therefore play a role in governing the total rate of fatty acid production. Possesses both acetoacetyl-ACP synthase and acetyl transacylase activities. Its substrate specificity determines the biosynthesis of branched-chain and/or straight-chain of fatty acids. The chain is Beta-ketoacyl-[acyl-carrier-protein] synthase III from Nitratidesulfovibrio vulgaris (strain ATCC 29579 / DSM 644 / CCUG 34227 / NCIMB 8303 / VKM B-1760 / Hildenborough) (Desulfovibrio vulgaris).